Reading from the N-terminus, the 318-residue chain is Ribose-phosphate pyrophosphokinase (318 aa).

ATP contacts are provided by residues 46 to 48 and 105 to 106; these read DGE and RQ. Mg(2+)-binding residues include histidine 139 and aspartate 178. Residue lysine 201 is part of the active site. D-ribose 5-phosphate-binding positions include arginine 203, aspartate 227, and 231-235; that span reads DTAGT.

This sequence belongs to the ribose-phosphate pyrophosphokinase family. Class I subfamily. In terms of assembly, homohexamer. Mg(2+) is required as a cofactor.

The protein resides in the cytoplasm. The enzyme catalyses D-ribose 5-phosphate + ATP = 5-phospho-alpha-D-ribose 1-diphosphate + AMP + H(+). It participates in metabolic intermediate biosynthesis; 5-phospho-alpha-D-ribose 1-diphosphate biosynthesis; 5-phospho-alpha-D-ribose 1-diphosphate from D-ribose 5-phosphate (route I): step 1/1. Functionally, involved in the biosynthesis of the central metabolite phospho-alpha-D-ribosyl-1-pyrophosphate (PRPP) via the transfer of pyrophosphoryl group from ATP to 1-hydroxyl of ribose-5-phosphate (Rib-5-P). This Helicobacter pylori (strain ATCC 700392 / 26695) (Campylobacter pylori) protein is Ribose-phosphate pyrophosphokinase.